The chain runs to 798 residues: Putative antiporter subunit mnhA2 (798 aa).

The next 21 helical transmembrane spans lie at 1–21 (MSLVYLLSTLILIMVILLFTL), 33–53 (IALLAPIVASVYFLYQLPSVM), 78–98 (GLSLFFSLLISLIGLAVVYYA), 109–129 (LPRFYVYLLLFMFSMLGIVTA), 133–153 (ILMYVFWELTSVSSFLLIVYW), 167–187 (FMITVFGGLALLAGFIMIYIV), 209–229 (FIPIIILLLLGAFTKSAQFPF), 241–261 (TPVSAYLHSATMVKAGIFLLF), 272–292 (FYIYSVTFVGLITMIFGAVNA), 300–320 (AILAYSTISQLGMIVSMVGLG), 337–357 (MILFAALFHLMNHALYKGALF), 381–401 (VFPITHIVMLLSALSMAGIPF), 431–451 (IITVIGVIASIFTLVYGVYMI), 472–492 (PFLFTLPSAIMMILLPVIFFI), 526–546 (GFNLPLILSLIVIVVGFIMAL), 593–613 (ITITLLIFSMVVIYGMIQAGF), 625–645 (GPIEVITLIVVFVLGIALTFI), 649–669 (LTMVVLNGIIGYCVTIFFILM), 674–694 (LALTQLVVETITTILFIVSFS), 710–730 (AVKIIVSLLMAVIVVTLVFIA), and 766–786 (IDTLFEGMVLIIAGLGIYTLL).

It belongs to the CPA3 antiporters (TC 2.A.63) subunit A family. May form a heterooligomeric complex that consists of seven subunits: mnhA2, mnhB2, mnhC2, mnhD2, mnhE2, mnhF2 and mnhG2.

The protein localises to the cell membrane. In Staphylococcus saprophyticus subsp. saprophyticus (strain ATCC 15305 / DSM 20229 / NCIMB 8711 / NCTC 7292 / S-41), this protein is Putative antiporter subunit mnhA2 (mnhA2).